The following is a 437-amino-acid chain: O-methyltransferase 3 (437 aa).

The disordered stretch occupies residues 1–21; the sequence is MNNKTSNGDITNDEPTVGSKR. Positions 146–180 form a coiled coil; it reads SDNLYQDKDDLEKQEKEREKKMANLLSKNVDIKEL. Positions 408–437 are disordered; sequence DPINNNNNNNNNNNNNNNNTTTTTSTTTTN. Low complexity predominate over residues 411 to 437; sequence NNNNNNNNNNNNNNNNTTTTTSTTTTN.

The protein belongs to the methyltransferase superfamily. METL family.

In terms of biological role, probable methyltransferase. The sequence is that of O-methyltransferase 3 (omt3) from Dictyostelium discoideum (Social amoeba).